The sequence spans 538 residues: ESX-3 secretion system ATPase EccB3 (538 aa).

Residues methionine 1–serine 16 are compositionally biased toward basic and acidic residues. Residues methionine 1–asparagine 25 are disordered. A helical membrane pass occupies residues valine 75–isoleucine 95.

This sequence belongs to the EccB family. Part of the ESX-3 / type VII secretion system (T7SS), which is composed of cytosolic and membrane components. The ESX-3 membrane complex is composed of EccB3, EccC3, EccD3 and EccE3.

Its subcellular location is the cell inner membrane. Functionally, an ATPase. Part of the ESX-3 specialized secretion system, which is important for iron and zinc uptake or homeostasis. This Mycobacterium tuberculosis (strain CDC 1551 / Oshkosh) protein is ESX-3 secretion system ATPase EccB3.